The primary structure comprises 155 residues: MSAIPAGLAIRFKRWEGNADLPVPAYATVGAAGFDLRAHVPDDAPIVLKPGARCMAPTGFSVAIPDGYEMQVRPRSGLALKNGVTVVNAPGTVDSDYRGQVCVLLINLGEEDFTIRRGDRIAQGVIAAAPQWPLVEVEDLDATERGAGGFGSTGV.

Substrate is bound by residues 75–77 (RSG), asparagine 88, and 92–94 (TVD).

Belongs to the dUTPase family. Mg(2+) serves as cofactor.

It carries out the reaction dUTP + H2O = dUMP + diphosphate + H(+). The protein operates within pyrimidine metabolism; dUMP biosynthesis; dUMP from dCTP (dUTP route): step 2/2. Functionally, this enzyme is involved in nucleotide metabolism: it produces dUMP, the immediate precursor of thymidine nucleotides and it decreases the intracellular concentration of dUTP so that uracil cannot be incorporated into DNA. The chain is Deoxyuridine 5'-triphosphate nucleotidohydrolase from Caulobacter vibrioides (strain ATCC 19089 / CIP 103742 / CB 15) (Caulobacter crescentus).